A 287-amino-acid chain; its full sequence is uncharacterized protein (287 aa).

2 helical membrane passes run 12–32 and 217–237; these read IILL…GAAL and YTIG…VLIV.

It localises to the cell membrane. This is an uncharacterized protein from Mycoplasma pneumoniae (strain ATCC 29342 / M129 / Subtype 1) (Mycoplasmoides pneumoniae).